The sequence spans 193 residues: Potassium-transporting ATPase KdpC subunit (193 aa).

A helical membrane pass occupies residues Ile14–Ala34.

This sequence belongs to the KdpC family. The system is composed of three essential subunits: KdpA, KdpB and KdpC.

The protein localises to the cell membrane. Its function is as follows. Part of the high-affinity ATP-driven potassium transport (or Kdp) system, which catalyzes the hydrolysis of ATP coupled with the electrogenic transport of potassium into the cytoplasm. This subunit acts as a catalytic chaperone that increases the ATP-binding affinity of the ATP-hydrolyzing subunit KdpB by the formation of a transient KdpB/KdpC/ATP ternary complex. The chain is Potassium-transporting ATPase KdpC subunit from Bacillus cereus (strain ATCC 10987 / NRS 248).